The sequence spans 31 residues: Cytochrome b6-f complex subunit 6 (31 aa).

The helical transmembrane segment at 3–23 (ILIGYIILLACAFGLAAGLFF) threads the bilayer.

The protein belongs to the PetL family. In terms of assembly, the 4 large subunits of the cytochrome b6-f complex are cytochrome b6, subunit IV (17 kDa polypeptide, PetD), cytochrome f and the Rieske protein, while the 4 small subunits are PetG, PetL, PetM and PetN. The complex functions as a dimer.

Its subcellular location is the plastid. The protein localises to the chloroplast thylakoid membrane. Its function is as follows. Component of the cytochrome b6-f complex, which mediates electron transfer between photosystem II (PSII) and photosystem I (PSI), cyclic electron flow around PSI, and state transitions. PetL is important for photoautotrophic growth as well as for electron transfer efficiency and stability of the cytochrome b6-f complex. In Rhodomonas salina (Cryptomonas salina), this protein is Cytochrome b6-f complex subunit 6.